A 571-amino-acid polypeptide reads, in one-letter code: MDKNEIILKLKNTSTSPGVYLWKDAKQNVLYVGKAKNLRKRLLQYFDGAINSYKTSKLMSLVADFEVYICKTNKEALLLEKAMVDRFNPEFNILLLDDRKYPYLKVQLLKDSLLITLSRKVNTKYTKNTLYYGPFPSGYGAKPILKLLQHEALYESGLLIKNNDSSFWVNQFAKIKEILSFKNNNYLNELTNKMHTAANNMQFELALFLRDGLTYLKKLKESQIIELSQYKNIDVFAYKTDEKLIYATVLFYRYGVLINKVNLTIPLGISIDESIRVFFEQFYADKILPDNFIVQEEILKYDLNLSSDYKFISPKIGTNKKVLDLALLNLNDYYEKEHLIMQNQLEKADSMLSSLNKYLNLPKLKNIVIFDNSNINNINPVGVAIVYTNGIKNKSLYRKFNLEALSYRSADVDYIRQSITKFFSSDKNTKDFDLIITDGGLQQVNEAKKTLKVLGINIPVIGLVKNEYHKTRALIDLNLNEIYVNDLELHNYLAQIQIEVDRFAKSHFRNRQKISSLEGKLRNIKGLGHNMEQKLLNHFKSYAKIYDASVEELAKIVPFNVAKSIKNKDYE.

A GIY-YIG domain is found at 15-93; that stretch reads TSPGVYLWKD…VDRFNPEFNI (79 aa). One can recognise a UVR domain in the interval 184 to 219; that stretch reads NNYLNELTNKMHTAANNMQFELALFLRDGLTYLKKL.

The protein belongs to the UvrC family. As to quaternary structure, interacts with UvrB in an incision complex.

The protein localises to the cytoplasm. In terms of biological role, the UvrABC repair system catalyzes the recognition and processing of DNA lesions. UvrC both incises the 5' and 3' sides of the lesion. The N-terminal half is responsible for the 3' incision and the C-terminal half is responsible for the 5' incision. This is UvrABC system protein C from Mycoplasmopsis agalactiae (strain NCTC 10123 / CIP 59.7 / PG2) (Mycoplasma agalactiae).